A 191-amino-acid polypeptide reads, in one-letter code: Transposon Tn1546 resolvase (191 aa).

In terms of domain architecture, Resolvase/invertase-type recombinase catalytic spans 2-138; the sequence is RKIGYIRVSS…EGIELAKKEG (137 aa). The active-site O-(5'-phospho-DNA)-serine intermediate is the Ser10. The H-T-H motif DNA-binding region spans 168 to 187; that stretch reads VNQICEITNVSRASLYRKLS.

It belongs to the site-specific recombinase resolvase family.

Its function is as follows. Resolvase catalyzes the resolution (a site-specific recombination) of the cointegrated replicon to yield the final transposition products. This Enterococcus faecium (Streptococcus faecium) protein is Transposon Tn1546 resolvase.